Here is a 227-residue protein sequence, read N- to C-terminus: Pectinesterase inhibitor 28 (227 aa).

The first 25 residues, 1 to 25 (MASSMAPAAAMAILLLALLMPATLC), serve as a signal peptide directing secretion. Residues 28–50 (SGPPSSKHGHGGHAKRAPPPASP) form a disordered region. The span at 34–43 (KHGHGGHAKR) shows a compositional bias: basic residues. Residues Cys-66 and Cys-75 are joined by a disulfide bond. N-linked (GlcNAc...) asparagine glycans are attached at residues Asn-67, Asn-104, and Asn-117. Residues Cys-139 and Cys-179 are joined by a disulfide bond.

This sequence belongs to the PMEI family. Expressed in roots, leaves, culms and flag leaves.

The protein localises to the secreted. It is found in the extracellular space. It localises to the apoplast. Pectin methylesterase (PME) inhibitor that inhibits PME in vitro. Functions as a critical structural modulator by regulating the degree of pectin methylesterification and the physiochemical properties of the cell wall components. The protein is Pectinesterase inhibitor 28 of Oryza sativa subsp. japonica (Rice).